Reading from the N-terminus, the 421-residue chain is Alpha-tubulin N-acetyltransferase 1 (421 aa).

Residues 1-190 (MEFPFDVDAL…NNFVIFEGFF (190 aa)) enclose the N-acetyltransferase domain. At lysine 56 the chain carries N6-acetyllysine; by autocatalysis. Acetyl-CoA is bound at residue 124 to 137 (FYIHESVQRHGHGR). Position 146 is an N6-acetyllysine; by autocatalysis (lysine 146). 160–169 (SQKLLKFLNK) contributes to the acetyl-CoA binding site. The disordered stretch occupies residues 196 to 235 (PPAPSLRATRHSRAAAVDPTPAAPARKLPPKRAEGDIKPY). The segment covering 209-221 (AAAVDPTPAAPAR) has biased composition (low complexity). The segment covering 226–235 (KRAEGDIKPY) has biased composition (basic and acidic residues). N6-acetyllysine; by autocatalysis occurs at positions 233 and 244. Positions 252–284 (PLNRAPRRATPPAHPPPRSSSLGNSPERGPLRP) are disordered. A phosphoserine mark is found at serine 272 and serine 276. Arginine 305 carries the post-translational modification Asymmetric dimethylarginine. The interval 306 to 402 (LLLAADPGGS…PAQSWTVGGD (97 aa)) is disordered. Position 315 is a phosphoserine (serine 315). Residue arginine 323 is modified to Omega-N-methylarginine. Residues 342-354 (VNSSSPNTGNQDS) show a composition bias toward polar residues. Over residues 355-367 (KQGEQETKNRSAS) the composition is skewed to basic and acidic residues.

It belongs to the acetyltransferase ATAT1 family. As to quaternary structure, component of the BBSome complex. Interacts with AP2 alpha-adaptins, including AP2A2, but not with AP1 gamma-adaptin (AP1G1/AP1G2); this interaction is required for efficient alpha-tubulin acetylation, hence clathrin-coated pits are sites of microtubule acetylation. Autoacetylation strongly increases tubulin acetylation.

It is found in the cytoplasm. It localises to the membrane. The protein resides in the clathrin-coated pit. Its subcellular location is the cell junction. The protein localises to the focal adhesion. It is found in the cell projection. It localises to the axon. The protein resides in the cytoskeleton. Its subcellular location is the spindle. The catalysed reaction is L-lysyl-[alpha-tubulin] + acetyl-CoA = N(6)-acetyl-L-lysyl-[alpha-tubulin] + CoA + H(+). Specifically acetylates 'Lys-40' in alpha-tubulin on the lumenal side of microtubules. Promotes microtubule destabilization and accelerates microtubule dynamics; this activity may be independent of acetylation activity. Acetylates alpha-tubulin with a slow enzymatic rate, due to a catalytic site that is not optimized for acetyl transfer. Enters the microtubule through each end and diffuses quickly throughout the lumen of microtubules. Acetylates only long/old microtubules because of its slow acetylation rate since it does not have time to act on dynamically unstable microtubules before the enzyme is released. Required for normal sperm flagellar function. Promotes directional cell locomotion and chemotaxis, through AP2A2-dependent acetylation of alpha-tubulin at clathrin-coated pits that are concentrated at the leading edge of migrating cells. May facilitate primary cilium assembly. The sequence is that of Alpha-tubulin N-acetyltransferase 1 from Homo sapiens (Human).